We begin with the raw amino-acid sequence, 249 residues long: MAKSRNEPGNIELPGFSDTLQLTPKIDKPHYAGHRDRLKQRFRDTPDALADYELLEMLLFRAIRRADTKPLAKALLMRFGSIAEVLAAPEKLIAEVPGAGPTVAHELKLVEAVAKRSARSTVMEREVLGSWNKVIEYCTAAMAYETREQFRILFLDKKNKLIADEVQQTGTVDHTPVYPREVVKRALELSATAIILVHNHPSGDPTPSRADIDMTKQLVNAAKALNITVHDHVIVGKHGHASFRGLGLI.

The MPN domain occupies 127–249; the sequence is VLGSWNKVIE…HASFRGLGLI (123 aa). Residues histidine 198, histidine 200, and aspartate 211 each coordinate Zn(2+). Positions 198–211 match the JAMM motif motif; it reads HNHPSGDPTPSRAD.

Belongs to the UPF0758 family.

The polypeptide is UPF0758 protein Oant_1909 (Brucella anthropi (strain ATCC 49188 / DSM 6882 / CCUG 24695 / JCM 21032 / LMG 3331 / NBRC 15819 / NCTC 12168 / Alc 37) (Ochrobactrum anthropi)).